A 182-amino-acid chain; its full sequence is Protein SrpB (182 aa).

Helical transmembrane passes span 11–31 (WLGLSFRLLLAMLVGAVIGLN), 43–63 (TFTLVAMGSALFVMVPIQAEG), 73–93 (LSRTVQGVAAGVGFLGAGLIL), and 116–136 (IWITAALGAVIGCGLWQLGLI).

This sequence belongs to the MgtC/SapB family.

Its subcellular location is the cell membrane. In Synechococcus elongatus (strain ATCC 33912 / PCC 7942 / FACHB-805) (Anacystis nidulans R2), this protein is Protein SrpB (srpB).